Consider the following 190-residue polypeptide: Protein GrpE (190 aa).

The disordered stretch occupies residues 1–41 (MAKEKQEEQQKQTAPENEKAPKKDIKKEASDKKGDQTSKLK).

Belongs to the GrpE family. Homodimer.

The protein localises to the cytoplasm. Its function is as follows. Participates actively in the response to hyperosmotic and heat shock by preventing the aggregation of stress-denatured proteins, in association with DnaK and GrpE. It is the nucleotide exchange factor for DnaK and may function as a thermosensor. Unfolded proteins bind initially to DnaJ; upon interaction with the DnaJ-bound protein, DnaK hydrolyzes its bound ATP, resulting in the formation of a stable complex. GrpE releases ADP from DnaK; ATP binding to DnaK triggers the release of the substrate protein, thus completing the reaction cycle. Several rounds of ATP-dependent interactions between DnaJ, DnaK and GrpE are required for fully efficient folding. The polypeptide is Protein GrpE (Limosilactobacillus reuteri (strain DSM 20016) (Lactobacillus reuteri)).